Reading from the N-terminus, the 416-residue chain is L-threonine dehydratase biosynthetic IlvA (416 aa).

N6-(pyridoxal phosphate)lysine is present on Lys51. Residues Asn78, 184 to 188, and Ser309 contribute to the pyridoxal 5'-phosphate site; that span reads GGGGL. One can recognise an ACT-like domain in the interval 333 to 407; sequence HYFVINFPQR…FDNRYVNLHG (75 aa).

It belongs to the serine/threonine dehydratase family. In terms of assembly, homotetramer. Requires pyridoxal 5'-phosphate as cofactor.

It catalyses the reaction L-threonine = 2-oxobutanoate + NH4(+). It participates in amino-acid biosynthesis; L-isoleucine biosynthesis; 2-oxobutanoate from L-threonine: step 1/1. Functionally, catalyzes the anaerobic formation of alpha-ketobutyrate and ammonia from threonine in a two-step reaction. The first step involved a dehydration of threonine and a production of enamine intermediates (aminocrotonate), which tautomerizes to its imine form (iminobutyrate). Both intermediates are unstable and short-lived. The second step is the nonenzymatic hydrolysis of the enamine/imine intermediates to form 2-ketobutyrate and free ammonia. In the low water environment of the cell, the second step is accelerated by RidA. The chain is L-threonine dehydratase biosynthetic IlvA (ilvA) from Lactococcus lactis subsp. lactis (strain IL1403) (Streptococcus lactis).